A 117-amino-acid polypeptide reads, in one-letter code: Large ribosomal subunit protein bL20 (117 aa).

Belongs to the bacterial ribosomal protein bL20 family.

Functionally, binds directly to 23S ribosomal RNA and is necessary for the in vitro assembly process of the 50S ribosomal subunit. It is not involved in the protein synthesizing functions of that subunit. This is Large ribosomal subunit protein bL20 from Mesomycoplasma hyopneumoniae (strain 7448) (Mycoplasma hyopneumoniae).